A 357-amino-acid chain; its full sequence is Anthranilate phosphoribosyltransferase (357 aa).

Residues glycine 91, 94–95 (GD), threonine 99, 101–104 (NIST), 119–127 (KHGNRSVSS), and serine 131 contribute to the 5-phospho-alpha-D-ribose 1-diphosphate site. Residue glycine 91 coordinates anthranilate. Position 103 (serine 103) interacts with Mg(2+). Anthranilate is bound at residue asparagine 122. Arginine 177 contributes to the anthranilate binding site. Positions 235 and 236 each coordinate Mg(2+).

The protein belongs to the anthranilate phosphoribosyltransferase family. As to quaternary structure, homodimer. It depends on Mg(2+) as a cofactor.

The catalysed reaction is N-(5-phospho-beta-D-ribosyl)anthranilate + diphosphate = 5-phospho-alpha-D-ribose 1-diphosphate + anthranilate. Its pathway is amino-acid biosynthesis; L-tryptophan biosynthesis; L-tryptophan from chorismate: step 2/5. Its function is as follows. Catalyzes the transfer of the phosphoribosyl group of 5-phosphorylribose-1-pyrophosphate (PRPP) to anthranilate to yield N-(5'-phosphoribosyl)-anthranilate (PRA). This is Anthranilate phosphoribosyltransferase from Shewanella baltica (strain OS195).